A 219-amino-acid polypeptide reads, in one-letter code: Glutathione S-transferase U19 (219 aa).

The region spanning 3–82 is the GST N-terminal domain; it reads NEVILLDFWP…YIDEVWSHKN (80 aa). Residues 13-14, 39-40, 53-54, and 66-67 each bind glutathione; these read SM, NK, KI, and ES. One can recognise a GST C-terminal domain in the interval 88 to 208; that stretch reads DPYLRAQARF…LPDPEKVTEF (121 aa). Serine 198 carries the post-translational modification Phosphoserine.

This sequence belongs to the GST superfamily. Tau family.

It is found in the cytoplasm. It localises to the cytosol. It catalyses the reaction RX + glutathione = an S-substituted glutathione + a halide anion + H(+). In terms of biological role, catalyzes the glutathionylation of 12-oxophytodienoate (OPDA). In vitro, possesses glutathione S-transferase activity toward 1-chloro-2,4-dinitrobenzene (CDNB) and benzyl isothiocyanate (BITC), and glutathione peroxidase activity toward cumene hydroperoxide. The sequence is that of Glutathione S-transferase U19 (GSTU19) from Arabidopsis thaliana (Mouse-ear cress).